The following is a 226-amino-acid chain: RNA pyrophosphohydrolase (226 aa).

The Nudix hydrolase domain occupies 6–149 (GFRPNVGIIL…KRGVYEMALT (144 aa)). Positions 38–59 (GGIDRGETPEQAMFRELHEEVG) match the Nudix box motif. A disordered region spans residues 197–226 (MELPPGASFDPDPRTGDGDPGMPGIHKPAG).

Belongs to the Nudix hydrolase family. RppH subfamily. A divalent metal cation serves as cofactor.

Functionally, accelerates the degradation of transcripts by removing pyrophosphate from the 5'-end of triphosphorylated RNA, leading to a more labile monophosphorylated state that can stimulate subsequent ribonuclease cleavage. The chain is RNA pyrophosphohydrolase from Paracidovorax citrulli (strain AAC00-1) (Acidovorax citrulli).